The primary structure comprises 381 residues: uncharacterized protein (381 aa).

Residues Met-1–Ala-16 form the signal peptide. The Lumenal portion of the chain corresponds to His-17–Asn-303. Cys-118 and Cys-149 are joined by a disulfide. N-linked (GlcNAc...) asparagine glycosylation is found at Asn-133, Asn-192, Asn-225, Asn-243, Asn-246, and Asn-287. A helical membrane pass occupies residues Gln-304–Phe-324. The Cytoplasmic portion of the chain corresponds to Lys-325–Met-359. A helical membrane pass occupies residues Asp-360–Leu-380. Residue Lys-381 is a topological domain, lumenal.

The protein belongs to the calreticulin family.

Its subcellular location is the endoplasmic reticulum membrane. This is an uncharacterized protein from Schizosaccharomyces pombe (strain 972 / ATCC 24843) (Fission yeast).